Reading from the N-terminus, the 250-residue chain is Transmembrane ascorbate-dependent reductase CYB561 (250 aa).

Met1 is modified (N-acetylmethionine). Over 1–15 (MEHSSASVPAALPYY) the chain is Cytoplasmic. Residues 16 to 36 (VAFSQLLGLTVVAVTGAWLGL) traverse the membrane as a helical segment. One can recognise a Cytochrome b561 domain in the interval 18–219 (FSQLLGLTVV…FGVVVLYILA (202 aa)). Over 37–50 (YRGGIAWESSLQFN) the chain is Vesicular. Residues 51-71 (VHPLCMVIGMIFLQGDALLVY) traverse the membrane as a helical segment. Heme b contacts are provided by His52, Arg72, and Lys79. Residues 72-83 (RVFRREAKRTTK) are Cytoplasmic-facing. Lys79 and Lys83 together coordinate L-ascorbate. The helical transmembrane segment at 84 to 104 (ILHGLLHVFAFIIALVGLVAV) threads the bilayer. Residues His86, 115-118 (DLYS), and His120 contribute to the heme b site. Residues 105-123 (FDYHKKKGYADLYSLHSWC) are Vesicular-facing. Residues 124–144 (GILVFVLYFVQWLVGFSFFLF) traverse the membrane as a helical segment. Residues 145–157 (PGASFSLRSRYRP) lie on the Cytoplasmic side of the membrane. Arg152 is an L-ascorbate binding site. A helical transmembrane segment spans residues 158 to 178 (QHIFFGATIFLFSVGTALLGL). 2 residues coordinate heme b: His159 and Glu180. The Vesicular segment spans residues 179-197 (KEALLFKLGSKYSTFEPEG). The helical transmembrane segment at 198-218 (VLANVLGLLLVCFGVVVLYIL) threads the bilayer. Residues 219-250 (AQADWKRPSQAEEQALSMDFKTLTEGDSPSPQ) lie on the Cytoplasmic side of the membrane. Lys224 is a binding site for heme b. Ser246 and Ser248 each carry phosphoserine.

It depends on heme b as a cofactor. In terms of tissue distribution, abundantly distributed in a number of neuroendocrine tissues.

The protein localises to the cytoplasmic vesicle. The protein resides in the secretory vesicle. Its subcellular location is the chromaffin granule membrane. It catalyses the reaction monodehydro-L-ascorbate radical(out) + L-ascorbate(in) = monodehydro-L-ascorbate radical(in) + L-ascorbate(out). Its function is as follows. Transmembrane reductase that uses ascorbate as an electron donor in the cytoplasm and transfers electrons across membranes to reduce monodehydro-L-ascorbate radical in the lumen of secretory vesicles. It is therefore involved the regeneration and homeostasis within secretory vesicles of ascorbate which in turn provides reducing equivalents needed to support the activity of intravesicular enzymes. This Mus musculus (Mouse) protein is Transmembrane ascorbate-dependent reductase CYB561.